The sequence spans 191 residues: dTTP/UTP pyrophosphatase (191 aa).

The active-site Proton acceptor is the Asp69.

This sequence belongs to the Maf family. YhdE subfamily. It depends on a divalent metal cation as a cofactor.

It is found in the cytoplasm. It catalyses the reaction dTTP + H2O = dTMP + diphosphate + H(+). The enzyme catalyses UTP + H2O = UMP + diphosphate + H(+). In terms of biological role, nucleoside triphosphate pyrophosphatase that hydrolyzes dTTP and UTP. May have a dual role in cell division arrest and in preventing the incorporation of modified nucleotides into cellular nucleic acids. In Pelotomaculum thermopropionicum (strain DSM 13744 / JCM 10971 / SI), this protein is dTTP/UTP pyrophosphatase.